Here is a 948-residue protein sequence, read N- to C-terminus: RNA polymerase-associated protein RapA (948 aa).

In terms of domain architecture, Helicase ATP-binding spans 164–332; sequence EVADRSAPRV…FARLRLLDPN (169 aa). 177-184 lines the ATP pocket; that stretch reads DEVGLGKT. The short motif at 278–281 is the DEAH box element; sequence DEAH. Residues 473–627 form the Helicase C-terminal domain; that stretch reads RVDWLIDTLK…TCPTGNALQH (155 aa).

This sequence belongs to the SNF2/RAD54 helicase family. RapA subfamily. In terms of assembly, interacts with the RNAP. Has a higher affinity for the core RNAP than for the holoenzyme. Its ATPase activity is stimulated by binding to RNAP.

Transcription regulator that activates transcription by stimulating RNA polymerase (RNAP) recycling in case of stress conditions such as supercoiled DNA or high salt concentrations. Probably acts by releasing the RNAP, when it is trapped or immobilized on tightly supercoiled DNA. Does not activate transcription on linear DNA. Probably not involved in DNA repair. This chain is RNA polymerase-associated protein RapA, found in Pseudomonas putida (strain GB-1).